A 123-amino-acid chain; its full sequence is UPF0102 protein Maqu_2464 (123 aa).

This sequence belongs to the UPF0102 family.

In Marinobacter nauticus (strain ATCC 700491 / DSM 11845 / VT8) (Marinobacter aquaeolei), this protein is UPF0102 protein Maqu_2464.